Consider the following 520-residue polypeptide: ATP-dependent clpX-like chaperone, mitochondrial (520 aa).

A mitochondrion-targeting transit peptide spans 1 to 13 (MLKSASQNFFRAY). Residue 140 to 147 (GPSGSGKT) coordinates ATP.

It belongs to the ClpX chaperone family. In terms of assembly, homohexamer that forms a ring structure; this hexamerization requires ATP binding. Interacts with HEM1.

The protein resides in the mitochondrion inner membrane. In terms of biological role, ATP-dependent unfoldase that stimulates the incorporation of the pyridoxal phosphate cofactor into 5-aminolevulinate synthase (HEM1), thereby activating 5-aminolevulinate (ALA) synthesis, the first step in heme biosynthesis. Up-regulates heme biosynthesis. The protein is ATP-dependent clpX-like chaperone, mitochondrial of Saccharomyces cerevisiae (strain ATCC 204508 / S288c) (Baker's yeast).